A 331-amino-acid chain; its full sequence is L-lactate dehydrogenase A chain (331 aa).

NAD(+) contacts are provided by residues 29–57 (GMVGMASAISILLKDLCDELAMVDVMEDK) and Arg-98. Residues Arg-105, Asn-137, and Arg-168 each contribute to the substrate site. Asn-137 lines the NAD(+) pocket. His-192 (proton acceptor) is an active-site residue. Residue Thr-247 participates in substrate binding.

Belongs to the LDH/MDH superfamily. LDH family. Homotetramer.

Its subcellular location is the cytoplasm. The enzyme catalyses (S)-lactate + NAD(+) = pyruvate + NADH + H(+). It functions in the pathway fermentation; pyruvate fermentation to lactate; (S)-lactate from pyruvate: step 1/1. Interconverts simultaneously and stereospecifically pyruvate and lactate with concomitant interconversion of NADH and NAD(+). This chain is L-lactate dehydrogenase A chain (ldha), found in Dissostichus mawsoni (Antarctic cod).